A 35-amino-acid polypeptide reads, in one-letter code: Potassium channel toxin alpha-KTx 6.15 (35 aa).

4 disulfides stabilise this stretch: cysteine 3–cysteine 24, cysteine 9–cysteine 29, cysteine 13–cysteine 31, and cysteine 19–cysteine 34.

The protein belongs to the short scorpion toxin superfamily. Potassium channel inhibitor family. Alpha-KTx 06 subfamily. Expressed by the venom gland.

The protein localises to the secreted. In terms of biological role, blocks voltage-gated potassium channels rKv1.1/KCNA1 (IC(50)=13 nM), rKv1.2/KCNA2 (IC(50)=16 nM) and rKv1.3/KCNA3 (IC(50)=2 nM). The polypeptide is Potassium channel toxin alpha-KTx 6.15 (Hemiscorpius lepturus (Scorpion)).